We begin with the raw amino-acid sequence, 394 residues long: Nicotinate phosphoribosyltransferase (394 aa).

Position 218 is a phosphohistidine; by autocatalysis (His-218).

The protein belongs to the NAPRTase family. Post-translationally, transiently phosphorylated on a His residue during the reaction cycle. Phosphorylation strongly increases the affinity for substrates and increases the rate of nicotinate D-ribonucleotide production. Dephosphorylation regenerates the low-affinity form of the enzyme, leading to product release.

The enzyme catalyses nicotinate + 5-phospho-alpha-D-ribose 1-diphosphate + ATP + H2O = nicotinate beta-D-ribonucleotide + ADP + phosphate + diphosphate. Its pathway is cofactor biosynthesis; NAD(+) biosynthesis; nicotinate D-ribonucleotide from nicotinate: step 1/1. Its function is as follows. Catalyzes the synthesis of beta-nicotinate D-ribonucleotide from nicotinate and 5-phospho-D-ribose 1-phosphate at the expense of ATP. The protein is Nicotinate phosphoribosyltransferase of Xylella fastidiosa (strain 9a5c).